The sequence spans 349 residues: UDP-N-acetylenolpyruvoylglucosamine reductase (349 aa).

Residues Gly-25 to Arg-197 enclose the FAD-binding PCMH-type domain. The active site involves Arg-173. The active-site Proton donor is the Ser-249. Residue Glu-345 is part of the active site.

Belongs to the MurB family. It depends on FAD as a cofactor.

The protein resides in the cytoplasm. It catalyses the reaction UDP-N-acetyl-alpha-D-muramate + NADP(+) = UDP-N-acetyl-3-O-(1-carboxyvinyl)-alpha-D-glucosamine + NADPH + H(+). It participates in cell wall biogenesis; peptidoglycan biosynthesis. Functionally, cell wall formation. The chain is UDP-N-acetylenolpyruvoylglucosamine reductase from Burkholderia vietnamiensis (strain G4 / LMG 22486) (Burkholderia cepacia (strain R1808)).